Here is an 81-residue protein sequence, read N- to C-terminus: ATP synthase subunit c, chloroplastic (81 aa).

2 consecutive transmembrane segments (helical) span residues 3-23 and 53-73; these read PLIS…ASIG and LLLS…VALA.

The protein belongs to the ATPase C chain family. As to quaternary structure, F-type ATPases have 2 components, F(1) - the catalytic core - and F(0) - the membrane proton channel. F(1) has five subunits: alpha(3), beta(3), gamma(1), delta(1), epsilon(1). F(0) has four main subunits: a(1), b(1), b'(1) and c(10-14). The alpha and beta chains form an alternating ring which encloses part of the gamma chain. F(1) is attached to F(0) by a central stalk formed by the gamma and epsilon chains, while a peripheral stalk is formed by the delta, b and b' chains.

It is found in the plastid. The protein resides in the chloroplast thylakoid membrane. Its function is as follows. F(1)F(0) ATP synthase produces ATP from ADP in the presence of a proton or sodium gradient. F-type ATPases consist of two structural domains, F(1) containing the extramembraneous catalytic core and F(0) containing the membrane proton channel, linked together by a central stalk and a peripheral stalk. During catalysis, ATP synthesis in the catalytic domain of F(1) is coupled via a rotary mechanism of the central stalk subunits to proton translocation. Functionally, key component of the F(0) channel; it plays a direct role in translocation across the membrane. A homomeric c-ring of between 10-14 subunits forms the central stalk rotor element with the F(1) delta and epsilon subunits. The chain is ATP synthase subunit c, chloroplastic from Angiopteris evecta (Mule's foot fern).